A 945-amino-acid chain; its full sequence is Isoleucine--tRNA ligase (945 aa).

Positions Pro66–His76 match the 'HIGH' region motif. Glu581 contacts L-isoleucyl-5'-AMP. A 'KMSKS' region motif is present at residues Lys622–Ser626. An ATP-binding site is contributed by Lys625. Positions 908, 911, 928, and 931 each coordinate Zn(2+).

Belongs to the class-I aminoacyl-tRNA synthetase family. IleS type 1 subfamily. As to quaternary structure, monomer. Zn(2+) is required as a cofactor.

Its subcellular location is the cytoplasm. The enzyme catalyses tRNA(Ile) + L-isoleucine + ATP = L-isoleucyl-tRNA(Ile) + AMP + diphosphate. Functionally, catalyzes the attachment of isoleucine to tRNA(Ile). As IleRS can inadvertently accommodate and process structurally similar amino acids such as valine, to avoid such errors it has two additional distinct tRNA(Ile)-dependent editing activities. One activity is designated as 'pretransfer' editing and involves the hydrolysis of activated Val-AMP. The other activity is designated 'posttransfer' editing and involves deacylation of mischarged Val-tRNA(Ile). The sequence is that of Isoleucine--tRNA ligase from Burkholderia vietnamiensis (strain G4 / LMG 22486) (Burkholderia cepacia (strain R1808)).